The primary structure comprises 440 residues: Putative sodium-coupled neutral amino acid transporter 8 (440 aa).

The next 11 helical transmembrane spans lie at 29–49, 58–78, 100–120, 156–176, 183–203, 223–243, 255–275, 300–320, 350–370, 373–393, and 418–438; these read AIFI…PWAF, AIMV…ILGY, IGKL…VAFL, FAIT…KEIS, ILGT…YYVM, MFSV…CVTI, WAAV…FTGI, VIIA…IILL, VVIT…VPDI, VISV…GLCL, and VVCG…EIIA.

Belongs to the amino acid/polyamine transporter 2 family.

It localises to the membrane. Functionally, putative sodium-dependent amino acid/proton antiporter. The sequence is that of Putative sodium-coupled neutral amino acid transporter 8 (slc38a8) from Xenopus tropicalis (Western clawed frog).